We begin with the raw amino-acid sequence, 59 residues long: Large ribosomal subunit protein uL30 (59 aa).

The protein belongs to the universal ribosomal protein uL30 family. Part of the 50S ribosomal subunit.

This Geotalea uraniireducens (strain Rf4) (Geobacter uraniireducens) protein is Large ribosomal subunit protein uL30.